Here is a 289-residue protein sequence, read N- to C-terminus: Serine/threonine-protein phosphatase Pgam5, mitochondrial (289 aa).

The protein belongs to the phosphoglycerate mutase family. BPG-dependent PGAM subfamily. In terms of assembly, interacts with Pk92B/ASK1.

It localises to the mitochondrion outer membrane. The catalysed reaction is O-phospho-L-seryl-[protein] + H2O = L-seryl-[protein] + phosphate. It catalyses the reaction O-phospho-L-threonyl-[protein] + H2O = L-threonyl-[protein] + phosphate. Functionally, displays phosphatase activity for serine/threonine residues, and dephosphorylates and activates Pk92B kinase. Has apparently no phosphoglycerate mutase activity. This chain is Serine/threonine-protein phosphatase Pgam5, mitochondrial, found in Drosophila mojavensis (Fruit fly).